The primary structure comprises 308 residues: Glutaminase (308 aa).

S66, N117, E161, N168, Y192, Y244, and V262 together coordinate substrate.

It belongs to the glutaminase family. Homotetramer.

The catalysed reaction is L-glutamine + H2O = L-glutamate + NH4(+). The polypeptide is Glutaminase (Salmonella agona (strain SL483)).